The primary structure comprises 161 residues: Cytidylate kinase (161 aa).

An ATP-binding site is contributed by 7-15 (GLAGTGTTT).

It belongs to the cytidylate kinase family. Type 2 subfamily.

Its subcellular location is the cytoplasm. It carries out the reaction CMP + ATP = CDP + ADP. The enzyme catalyses dCMP + ATP = dCDP + ADP. The sequence is that of Cytidylate kinase (cmk) from Methanothermobacter thermautotrophicus (strain ATCC 29096 / DSM 1053 / JCM 10044 / NBRC 100330 / Delta H) (Methanobacterium thermoautotrophicum).